Here is a 501-residue protein sequence, read N- to C-terminus: Probable histidine--tRNA ligase, mitochondrial (501 aa).

Residues 32–54 (TNSNNNNNNNNNNNNNNNNNKNI) form a disordered region. The span at 33 to 54 (NSNNNNNNNNNNNNNNNNNKNI) shows a compositional bias: low complexity.

Belongs to the class-II aminoacyl-tRNA synthetase family.

It localises to the mitochondrion matrix. It carries out the reaction tRNA(His) + L-histidine + ATP = L-histidyl-tRNA(His) + AMP + diphosphate + H(+). This is Probable histidine--tRNA ligase, mitochondrial (mhisS) from Dictyostelium discoideum (Social amoeba).